Consider the following 249-residue polypeptide: Aspartate/glutamate leucyltransferase (249 aa).

Belongs to the R-transferase family. Bpt subfamily.

The protein localises to the cytoplasm. It catalyses the reaction N-terminal L-glutamyl-[protein] + L-leucyl-tRNA(Leu) = N-terminal L-leucyl-L-glutamyl-[protein] + tRNA(Leu) + H(+). The catalysed reaction is N-terminal L-aspartyl-[protein] + L-leucyl-tRNA(Leu) = N-terminal L-leucyl-L-aspartyl-[protein] + tRNA(Leu) + H(+). In terms of biological role, functions in the N-end rule pathway of protein degradation where it conjugates Leu from its aminoacyl-tRNA to the N-termini of proteins containing an N-terminal aspartate or glutamate. The protein is Aspartate/glutamate leucyltransferase of Brucella canis (strain ATCC 23365 / NCTC 10854 / RM-666).